A 229-amino-acid polypeptide reads, in one-letter code: 2,3-bisphosphoglycerate-dependent phosphoglycerate mutase (229 aa).

Substrate is bound by residues 7–14 (RHGQSEWN), 20–21 (TG), Arg-59, 86–89 (ERHY), Lys-97, 113–114 (RR), and 182–183 (GN). The active-site Tele-phosphohistidine intermediate is the His-8. The active-site Proton donor/acceptor is the Glu-86.

This sequence belongs to the phosphoglycerate mutase family. BPG-dependent PGAM subfamily.

The enzyme catalyses (2R)-2-phosphoglycerate = (2R)-3-phosphoglycerate. Its pathway is carbohydrate degradation; glycolysis; pyruvate from D-glyceraldehyde 3-phosphate: step 3/5. In terms of biological role, catalyzes the interconversion of 2-phosphoglycerate and 3-phosphoglycerate. This chain is 2,3-bisphosphoglycerate-dependent phosphoglycerate mutase, found in Listeria welshimeri serovar 6b (strain ATCC 35897 / DSM 20650 / CCUG 15529 / CIP 8149 / NCTC 11857 / SLCC 5334 / V8).